Here is a 319-residue protein sequence, read N- to C-terminus: MNLEMMQNSCVNFAFGGLLTAMLVYWSSLAFPRISGLNKLAALITLLVNIALALTLSSRWFANGYFPLSNLYESLLFLAWGLTFVHLFIESKTKSRLIGAVSIPVAMFVTAFASLALPIEMQKASPLVPALKSNWLMMHVSIMMISYSILILGSLLSILFLIITRGQDINLKGSSVGTGSYTVKSLDSNPSFAFSNPSGIVQEQSNMLINSTRMNLLESIDNLSYRIIGLGFPLLTIGIVAGAVWANEAWGSYWSWDPKETWALITWLIFAAYLHCRITKSWQGKRPAILASVGFLVVWICYLGVNFLGKGLHSYGWLA.

8 helical membrane-spanning segments follow: residues 11-31 (VNFA…SLAF), 34-54 (ISGL…ALAL), 71-91 (LYES…FIES), 97-117 (LIGA…SLAL), 142-162 (IMMI…LFLI), 227-247 (IIGL…VWAN), 254-274 (WSWD…AAYL), and 288-308 (AILA…VNFL).

The protein belongs to the CcmF/CycK/Ccl1/NrfE/CcsA family. As to quaternary structure, may interact with Ccs1.

It localises to the plastid. The protein resides in the chloroplast thylakoid membrane. Required during biogenesis of c-type cytochromes (cytochrome c6 and cytochrome f) at the step of heme attachment. This Porphyra purpurea (Red seaweed) protein is Cytochrome c biogenesis protein CcsA.